Consider the following 658-residue polypeptide: Protein cueball (658 aa).

The Extracellular segment spans residues 1–543 (MSGVTARMEN…SYCKNSFNRT (543 aa)). N-linked (GlcNAc...) asparagine glycosylation is found at Asn-25 and Asn-122. LDL-receptor class B repeat units lie at residues 100 to 142 (RKLY…NHDL), 152 to 195 (RHLY…DHYS), and 196 to 241 (NRIY…NSRY). 3 consecutive EGF-like domains span residues 352–384 (EIPI…FEGE), 387–422 (DRSK…KRCE), and 458–495 (EEYT…KRCE). Cystine bridges form between Cys-356/Cys-365, Cys-360/Cys-375, Cys-391/Cys-401, Cys-395/Cys-410, Cys-412/Cys-421, Cys-462/Cys-472, Cys-466/Cys-483, and Cys-485/Cys-494. Residues Asn-400 and Asn-415 are each glycosylated (N-linked (GlcNAc...) asparagine). Asn-476 carries an N-linked (GlcNAc...) asparagine glycan. N-linked (GlcNAc...) asparagine glycosylation is present at Asn-541. Residues 544 to 564 (VVYASLAFAASLFILMVILLI) form a helical membrane-spanning segment. Residues 565 to 658 (VRRFYEEGRP…SCAGGDKNLP (94 aa)) lie on the Cytoplasmic side of the membrane.

Belongs to the cueball family.

It localises to the cell membrane. Its function is as follows. Has a role in spermatogenesis and oogenesis. This Culex quinquefasciatus (Southern house mosquito) protein is Protein cueball.